Here is a 343-residue protein sequence, read N- to C-terminus: Ferredoxin--NADP reductase (343 aa).

Asp31, Lys39, Tyr43, Val83, Ile118, Asp285, and Ser326 together coordinate FAD.

Belongs to the ferredoxin--NADP reductase type 2 family. Homodimer. FAD serves as cofactor.

The catalysed reaction is 2 reduced [2Fe-2S]-[ferredoxin] + NADP(+) + H(+) = 2 oxidized [2Fe-2S]-[ferredoxin] + NADPH. This chain is Ferredoxin--NADP reductase, found in Staphylococcus saprophyticus subsp. saprophyticus (strain ATCC 15305 / DSM 20229 / NCIMB 8711 / NCTC 7292 / S-41).